A 155-amino-acid polypeptide reads, in one-letter code: SsrA-binding protein (155 aa).

Belongs to the SmpB family.

Its subcellular location is the cytoplasm. In terms of biological role, required for rescue of stalled ribosomes mediated by trans-translation. Binds to transfer-messenger RNA (tmRNA), required for stable association of tmRNA with ribosomes. tmRNA and SmpB together mimic tRNA shape, replacing the anticodon stem-loop with SmpB. tmRNA is encoded by the ssrA gene; the 2 termini fold to resemble tRNA(Ala) and it encodes a 'tag peptide', a short internal open reading frame. During trans-translation Ala-aminoacylated tmRNA acts like a tRNA, entering the A-site of stalled ribosomes, displacing the stalled mRNA. The ribosome then switches to translate the ORF on the tmRNA; the nascent peptide is terminated with the 'tag peptide' encoded by the tmRNA and targeted for degradation. The ribosome is freed to recommence translation, which seems to be the essential function of trans-translation. In Lactococcus lactis subsp. cremoris (strain MG1363), this protein is SsrA-binding protein.